Here is a 341-residue protein sequence, read N- to C-terminus: D-aspartate oxidase (341 aa).

FAD-binding residues include Asp-36, Lys-37, Thr-43, Ser-44, Met-50, Gly-307, and Ile-311. The short motif at 339 to 341 is the Microbody targeting signal element; the sequence is SKL.

The protein belongs to the DAMOX/DASOX family. Homotetramer. Interacts with PEX5; the interaction is direct and required for localization of DDO to the peroxisome. FAD is required as a cofactor. Expressed in epithelial cells of the renal proximal tubules (not detected in the glomeruli or renal distal tubules), liver, right atrium of heart, lung, chief cells of the gastric mucosa, choroid plexus, pia mater, brain stem, midbrain, pons, medulla oblongata, hypothalamus, hippocampus, cerebral cortex, cerebellum, ependyma, olfactory bulb and the pituitary, pineal, thyroid and adrenal glands (at protein level).

It localises to the peroxisome matrix. It is found in the cytoplasm. Its subcellular location is the cytosol. The enzyme catalyses D-aspartate + O2 + H2O = oxaloacetate + H2O2 + NH4(+). It carries out the reaction D-glutamate + O2 + H2O = H2O2 + 2-oxoglutarate + NH4(+). Its function is as follows. Selectively catalyzes the oxidative deamination of acidic amino acids. Suppresses the level of D-aspartate in the brain, an amino acid that can act as an agonist for glutamate receptors. Protects the organism from the toxicity of D-amino acids. May also function in the intestine. This Sus scrofa (Pig) protein is D-aspartate oxidase (DDO).